A 486-amino-acid chain; its full sequence is Aspartyl/glutamyl-tRNA(Asn/Gln) amidotransferase subunit B (486 aa).

Belongs to the GatB/GatE family. GatB subfamily. As to quaternary structure, heterotrimer of A, B and C subunits.

The catalysed reaction is L-glutamyl-tRNA(Gln) + L-glutamine + ATP + H2O = L-glutaminyl-tRNA(Gln) + L-glutamate + ADP + phosphate + H(+). It carries out the reaction L-aspartyl-tRNA(Asn) + L-glutamine + ATP + H2O = L-asparaginyl-tRNA(Asn) + L-glutamate + ADP + phosphate + 2 H(+). Its function is as follows. Allows the formation of correctly charged Asn-tRNA(Asn) or Gln-tRNA(Gln) through the transamidation of misacylated Asp-tRNA(Asn) or Glu-tRNA(Gln) in organisms which lack either or both of asparaginyl-tRNA or glutaminyl-tRNA synthetases. The reaction takes place in the presence of glutamine and ATP through an activated phospho-Asp-tRNA(Asn) or phospho-Glu-tRNA(Gln). This Orientia tsutsugamushi (strain Ikeda) (Rickettsia tsutsugamushi) protein is Aspartyl/glutamyl-tRNA(Asn/Gln) amidotransferase subunit B.